The chain runs to 289 residues: 4-diphosphocytidyl-2-C-methyl-D-erythritol kinase (289 aa).

Residue lysine 10 is part of the active site. Residue 95–105 (PVSAGMGGGSA) coordinates ATP. Aspartate 137 is a catalytic residue.

This sequence belongs to the GHMP kinase family. IspE subfamily.

It carries out the reaction 4-CDP-2-C-methyl-D-erythritol + ATP = 4-CDP-2-C-methyl-D-erythritol 2-phosphate + ADP + H(+). It functions in the pathway isoprenoid biosynthesis; isopentenyl diphosphate biosynthesis via DXP pathway; isopentenyl diphosphate from 1-deoxy-D-xylulose 5-phosphate: step 3/6. Catalyzes the phosphorylation of the position 2 hydroxy group of 4-diphosphocytidyl-2C-methyl-D-erythritol. The sequence is that of 4-diphosphocytidyl-2-C-methyl-D-erythritol kinase from Ligilactobacillus salivarius (strain UCC118) (Lactobacillus salivarius).